We begin with the raw amino-acid sequence, 307 residues long: Pseudouridine-5'-phosphate glycosidase (307 aa).

Glu-25 functions as the Proton donor in the catalytic mechanism. 2 residues coordinate substrate: Lys-86 and Val-106. Residue Asp-138 participates in Mn(2+) binding. 140 to 142 (SAD) contributes to the substrate binding site. The active-site Nucleophile is Lys-159.

Belongs to the pseudouridine-5'-phosphate glycosidase family. As to quaternary structure, homotrimer. Requires Mn(2+) as cofactor.

The enzyme catalyses D-ribose 5-phosphate + uracil = psi-UMP + H2O. Functionally, catalyzes the reversible cleavage of pseudouridine 5'-phosphate (PsiMP) to ribose 5-phosphate and uracil. Functions biologically in the cleavage direction, as part of a pseudouridine degradation pathway. The polypeptide is Pseudouridine-5'-phosphate glycosidase (Caldanaerobacter subterraneus subsp. tengcongensis (strain DSM 15242 / JCM 11007 / NBRC 100824 / MB4) (Thermoanaerobacter tengcongensis)).